Reading from the N-terminus, the 273-residue chain is MQWNVPRTMSRLALRTFVEAQKARLFDHHWRIKGPLLVHRGEYRVAWTPHLRKQWLHLSAVQCLAKQRNLLDAQPPQLGTLRQERWEQDILSKRVLSSSSTSQETPSEKKEETDPLQDKSISLYQRFKKTFRQYGKVLIPVHLITSGIWFGTFYYATIKGVNVIPFLEVIGLPDSIVDILKNSQSGNALTAYAMFKIATPARYTVTLGGTSFTVKYLRSHGYMSTPPPVKEYLQGRMEETKELITEKMEETKDRLTEKLQETKGKVSFKKKVE.

Residues 94 to 116 (RVLSSSSTSQETPSEKKEETDPL) are disordered. Basic and acidic residues predominate over residues 106–116 (PSEKKEETDPL). A DUF1279 domain is found at 118 to 230 (DKSISLYQRF…GYMSTPPPVK (113 aa)). A helical membrane pass occupies residues 138–158 (LIPVHLITSGIWFGTFYYATI). Residues 233 to 269 (LQGRMEETKELITEKMEETKDRLTEKLQETKGKVSFK) are a coiled coil.

This sequence belongs to the FAM210 family. Interacts with ATAD3A. As to expression, expressed in skeletal muscle, heart, brain but not in bone.

It is found in the membrane. Its subcellular location is the mitochondrion. The protein resides in the cytoplasm. In terms of biological role, may play a role in the structure and strength of both muscle and bone. This chain is Protein FAM210A (Fam210a), found in Mus musculus (Mouse).